Reading from the N-terminus, the 336-residue chain is Ribosomal RNA small subunit methyltransferase C (336 aa).

The protein belongs to the methyltransferase superfamily. RsmC family. As to quaternary structure, monomer.

The protein localises to the cytoplasm. It carries out the reaction guanosine(1207) in 16S rRNA + S-adenosyl-L-methionine = N(2)-methylguanosine(1207) in 16S rRNA + S-adenosyl-L-homocysteine + H(+). In terms of biological role, specifically methylates the guanine in position 1207 of 16S rRNA in the 30S particle. This chain is Ribosomal RNA small subunit methyltransferase C, found in Hamiltonella defensa subsp. Acyrthosiphon pisum (strain 5AT).